Consider the following 278-residue polypeptide: 4-deoxy-L-threo-5-hexosulose-uronate ketol-isomerase (278 aa).

Zn(2+) is bound by residues histidine 196, histidine 198, glutamate 203, and histidine 245.

Belongs to the KduI family. It depends on Zn(2+) as a cofactor.

It carries out the reaction 5-dehydro-4-deoxy-D-glucuronate = 3-deoxy-D-glycero-2,5-hexodiulosonate. It functions in the pathway glycan metabolism; pectin degradation; 2-dehydro-3-deoxy-D-gluconate from pectin: step 4/5. Functionally, catalyzes the isomerization of 5-dehydro-4-deoxy-D-glucuronate to 3-deoxy-D-glycero-2,5-hexodiulosonate. The polypeptide is 4-deoxy-L-threo-5-hexosulose-uronate ketol-isomerase (Salmonella choleraesuis (strain SC-B67)).